The sequence spans 173 residues: Superoxide dismutase [Cu-Zn] (173 aa).

Residues 1–19 form the signal peptide; the sequence is MKRFSLAILALVVATGAQA. Cu cation is bound by residues H67, H69, and H92. The tract at residues 72 to 113 is disordered; it reads GSCQPATKDGKASAAESAGGHLDPQNTGKHEGPEGAGHLGDL. An intrachain disulfide couples C74 to C169. 4 residues coordinate Zn(2+): H92, H101, H109, and D112. H147 lines the Cu cation pocket.

Belongs to the Cu-Zn superoxide dismutase family. As to quaternary structure, monomer. It depends on Cu cation as a cofactor. The cofactor is Zn(2+).

It localises to the periplasm. The enzyme catalyses 2 superoxide + 2 H(+) = H2O2 + O2. Functionally, destroys radicals which are normally produced within the cells and which are toxic to biological systems. The protein is Superoxide dismutase [Cu-Zn] (sodC) of Escherichia coli O157:H7.